Consider the following 257-residue polypeptide: Snake venom serine protease BITS01A (257 aa).

The N-terminal stretch at 1–18 is a signal peptide; sequence MVLIRVIANLLILQVSYA. Positions 19–24 are excised as a propeptide; it reads QKSSEL. A Peptidase S1 domain is found at 25–248; the sequence is VVGGDECDIN…YLPWIQSIIA (224 aa). Intrachain disulfides connect Cys-31-Cys-162, Cys-49-Cys-65, Cys-97-Cys-255, Cys-141-Cys-209, Cys-173-Cys-188, and Cys-199-Cys-224. The active-site Charge relay system is the His-64. Asn-101 carries an N-linked (GlcNAc...) asparagine glycan. Catalysis depends on Asp-109, which acts as the Charge relay system. N-linked (GlcNAc...) asparagine glycans are attached at residues Asn-121, Asn-153, and Asn-169. Ser-203 serves as the catalytic Charge relay system. Residues Asn-210 and Asn-250 are each glycosylated (N-linked (GlcNAc...) asparagine).

Belongs to the peptidase S1 family. Snake venom subfamily. As to quaternary structure, monomer. As to expression, expressed by the venom gland.

The protein localises to the secreted. In terms of biological role, snake venom serine protease that may act in the hemostasis system of the prey. The sequence is that of Snake venom serine protease BITS01A from Bothrops insularis (Golden lancehead).